The following is a 185-amino-acid chain: Elongation factor P (185 aa).

It belongs to the elongation factor P family.

The protein localises to the cytoplasm. It participates in protein biosynthesis; polypeptide chain elongation. Functionally, involved in peptide bond synthesis. Stimulates efficient translation and peptide-bond synthesis on native or reconstituted 70S ribosomes in vitro. Probably functions indirectly by altering the affinity of the ribosome for aminoacyl-tRNA, thus increasing their reactivity as acceptors for peptidyl transferase. This Streptococcus equi subsp. zooepidemicus (strain MGCS10565) protein is Elongation factor P.